Here is a 145-residue protein sequence, read N- to C-terminus: Hydrophobin-like protein 1 (145 aa).

The N-terminal stretch at 1–20 (MYLLQISISLLLLISTAATA) is a signal peptide. N36 carries N-linked (GlcNAc...) asparagine glycosylation. 4 disulfides stabilise this stretch: C61–C121, C71–C113, C72–C104, and C122–C139.

Its subcellular location is the secreted. The protein localises to the cell wall. Its function is as follows. Aerial growth, conidiation, and dispersal of filamentous fungi in the environment rely upon a capability of their secreting small amphipathic proteins called hydrophobins (HPBs) with low sequence identity. Class I can self-assemble into an outermost layer of rodlet bundles on aerial cell surfaces, conferring cellular hydrophobicity that supports fungal growth, development and dispersal; whereas Class II form highly ordered films at water-air interfaces through intermolecular interactions but contribute nothing to the rodlet structure. In Botryotinia fuckeliana, hydrophobins are not involved in conferring surface hydrophobicity to conidia and aerial hyphae and their function in sclerotia and fruiting bodies remains to be investigated. This is Hydrophobin-like protein 1 from Botryotinia fuckeliana (strain B05.10) (Noble rot fungus).